Here is a 378-residue protein sequence, read N- to C-terminus: uncharacterized protein (378 aa).

This sequence belongs to the mimivirus L17x/L18x family.

This is an uncharacterized protein from Acanthamoeba polyphaga (Amoeba).